The sequence spans 197 residues: uncharacterized protein (197 aa).

Helical transmembrane passes span 11-31 (AAMV…IPLI), 50-70 (ILAI…AYLG), 79-99 (AIVA…GLFA), 108-128 (AIVA…LGIM), 136-156 (ALKG…FIGL), and 158-178 (TLQI…AFHF).

It belongs to the chromate ion transporter (CHR) (TC 2.A.51) family.

The protein resides in the cell membrane. This is an uncharacterized protein from Bacillus subtilis (strain 168).